The sequence spans 203 residues: Ras-related protein RABD2a (203 aa).

GTP-binding positions include 15-23 (GDSGVGKSC), 33-40 (YVESYIST), 63-67 (DTAGQ), 121-124 (NKSD), and 151-153 (SAK). Residues 37 to 45 (YISTIGVDF) carry the Effector region motif. The disordered stretch occupies residues 176-203 (QPAGNNARPPTVQIRGQPVAQKNGCCST). Residues C200 and C201 are each lipidated (S-geranylgeranyl cysteine).

It belongs to the small GTPase superfamily. Rab family. Does not interact with GC5.

The protein localises to the golgi apparatus. Its subcellular location is the trans-Golgi network membrane. The protein resides in the golgi apparatus membrane. Functionally, protein transport. Regulator of membrane traffic from the Golgi apparatus towards the endoplasmic reticulum (ER). This is Ras-related protein RABD2a (RABD2A) from Arabidopsis thaliana (Mouse-ear cress).